Reading from the N-terminus, the 419-residue chain is D-amino acid dehydrogenase (419 aa).

3 to 17 (VLILGGGVVGVTSAY) contacts FAD.

Belongs to the DadA oxidoreductase family. FAD is required as a cofactor.

The catalysed reaction is a D-alpha-amino acid + A + H2O = a 2-oxocarboxylate + AH2 + NH4(+). It functions in the pathway amino-acid degradation; D-alanine degradation; NH(3) and pyruvate from D-alanine: step 1/1. In terms of biological role, oxidative deamination of D-amino acids. The sequence is that of D-amino acid dehydrogenase from Methylobacterium radiotolerans (strain ATCC 27329 / DSM 1819 / JCM 2831 / NBRC 15690 / NCIMB 10815 / 0-1).